The chain runs to 234 residues: Bradykinin-releasing enzyme KR-E-1 (234 aa).

Residues 1-225 form the Peptidase S1 domain; the sequence is VIGGDECNIN…YSDWIQSIIA (225 aa). 6 disulfides stabilise this stretch: cysteine 7–cysteine 139, cysteine 26–cysteine 42, cysteine 74–cysteine 232, cysteine 118–cysteine 186, cysteine 150–cysteine 165, and cysteine 176–cysteine 201. A glycan (N-linked (GlcNAc...) asparagine) is linked at asparagine 20. Catalysis depends on charge relay system residues histidine 41 and aspartate 86. Catalysis depends on serine 180, which acts as the Charge relay system.

It belongs to the peptidase S1 family. Snake venom subfamily. Monomer. Expressed by the venom gland.

The protein localises to the secreted. Functionally, bradykinin-releasing enzyme. Releases bradykinin from bovine HMW kininogen. Has anticoagulant activity. Increases permeability of capillaries by intradermal injection into rabbits. The sequence is that of Bradykinin-releasing enzyme KR-E-1 from Gloydius ussuriensis (Ussuri mamushi).